Here is a 564-residue protein sequence, read N- to C-terminus: Proline--tRNA ligase (564 aa).

Belongs to the class-II aminoacyl-tRNA synthetase family. ProS type 1 subfamily. Homodimer.

Its subcellular location is the cytoplasm. It catalyses the reaction tRNA(Pro) + L-proline + ATP = L-prolyl-tRNA(Pro) + AMP + diphosphate. Its function is as follows. Catalyzes the attachment of proline to tRNA(Pro) in a two-step reaction: proline is first activated by ATP to form Pro-AMP and then transferred to the acceptor end of tRNA(Pro). As ProRS can inadvertently accommodate and process non-cognate amino acids such as alanine and cysteine, to avoid such errors it has two additional distinct editing activities against alanine. One activity is designated as 'pretransfer' editing and involves the tRNA(Pro)-independent hydrolysis of activated Ala-AMP. The other activity is designated 'posttransfer' editing and involves deacylation of mischarged Ala-tRNA(Pro). The misacylated Cys-tRNA(Pro) is not edited by ProRS. The polypeptide is Proline--tRNA ligase (Xylella fastidiosa (strain Temecula1 / ATCC 700964)).